The following is a 280-amino-acid chain: 4-deoxy-L-threo-5-hexosulose-uronate ketol-isomerase (280 aa).

Zn(2+)-binding residues include His198, His200, Glu205, and His247.

The protein belongs to the KduI family. Zn(2+) serves as cofactor.

The enzyme catalyses 5-dehydro-4-deoxy-D-glucuronate = 3-deoxy-D-glycero-2,5-hexodiulosonate. It participates in glycan metabolism; pectin degradation; 2-dehydro-3-deoxy-D-gluconate from pectin: step 4/5. Its function is as follows. Catalyzes the isomerization of 5-dehydro-4-deoxy-D-glucuronate to 3-deoxy-D-glycero-2,5-hexodiulosonate. This chain is 4-deoxy-L-threo-5-hexosulose-uronate ketol-isomerase, found in Bacteroides fragilis (strain ATCC 25285 / DSM 2151 / CCUG 4856 / JCM 11019 / LMG 10263 / NCTC 9343 / Onslow / VPI 2553 / EN-2).